An 820-amino-acid chain; its full sequence is 1,4-alpha-glucan-branching enzyme, chloroplastic/amyloplastic (820 aa).

A compositionally biased stretch (low complexity) spans 1–20 (MLCLTSSSSSAPAPLLPSLA). The disordered stretch occupies residues 1 to 28 (MLCLTSSSSSAPAPLLPSLADRPSPGIA). A chloroplast-targeting transit peptide spans 1-64 (MLCLTSSSSS…SVPATARKNK (64 aa)). (1,4-alpha-D-glucosyl)n-binding residues include Trp-153 and Lys-188. Asp-409 functions as the Nucleophile in the catalytic mechanism. The active-site Proton donor is Glu-464.

Belongs to the glycosyl hydrolase 13 family. GlgB subfamily. In terms of assembly, monomer.

It is found in the plastid. The protein localises to the chloroplast. Its subcellular location is the amyloplast. It carries out the reaction Transfers a segment of a (1-&gt;4)-alpha-D-glucan chain to a primary hydroxy group in a similar glucan chain.. It participates in glycan biosynthesis; starch biosynthesis. Catalyzes the formation of the alpha-1,6-glucosidic linkages in starch by scission of a 1,4-alpha-linked oligosaccharide from growing alpha-1,4-glucan chains and the subsequent attachment of the oligosaccharide to the alpha-1,6 position. This Oryza sativa subsp. japonica (Rice) protein is 1,4-alpha-glucan-branching enzyme, chloroplastic/amyloplastic (SBE1).